We begin with the raw amino-acid sequence, 466 residues long: MTSEVLQTISSGSGFAQPQSSSTLDHDESLINPPLVKKKRNLPGNPDPEAEVIALSPTTLMATNRFLCEVCGKGFQRDQNLQLHRRGHNLPWKLKQRTSKEVRKRVYVCPEKTCVHHHSSRALGDLTGIKKHFCRKHGEKKWTCEKCAKRYAVQSDWKAHSKTCGTREYRCDCGTIFSRRDSFITHRAFCDALAEETAKINAVSHLNGLAAAGAPGSVNLNYQYLMGTFIPPLQPFVPQPQTNPNHHHQHFQPPTSSSLSLWMGQDIAPPQPQPDYDWVFGNAKAASACIDNNNTHDEQITQNANASLTTTTTLSAPSLFSSDQPQNANANSNVNMSATALLQKAAEIGATSTTTAATNDPSTFLQSFPLKSTDQTTSYDSGEKFFALFGSNNNIGLMSRSHDHQEIENARNDVTVASALDELQNYPWKRRRVDGGGEVGGGGQTRDFLGVGVQTLCHPSSINGWI.

Residues 1-23 (MTSEVLQTISSGSGFAQPQSSST) show a composition bias toward polar residues. The disordered stretch occupies residues 1–29 (MTSEVLQTISSGSGFAQPQSSSTLDHDES). The residue at position 56 (S56) is a Phosphoserine. A C2H2-type 1 zinc finger spans residues 66–88 (FLCEVCGKGFQRDQNLQLHRRGH). T98 carries the phosphothreonine; by KIN10 modification. A C2H2-type 2 zinc finger spans residues 107–137 (YVCPEKTCVHHHSSRALGDLTGIKKHFCRKH). The short motif at 134 to 141 (CRKHGEKK) is the Nuclear localization signal element. The C2H2-type 2; degenerate zinc-finger motif lies at 142 to 165 (WTCEKCAKRYAVQSDWKAHSKTCG). C144, C147, H160, C164, C171, and C173 together coordinate Zn(2+). Residues 169–192 (YRCDCGTIFSRRDSFITHRAFCDA) form a CCHC-type 2; atypical zinc finger. 2 positions are modified to phosphoserine; by KIN10: S178 and S182. The interval 179–191 (RRDSFITHRAFCD) is SHR-binding. Residues H186 and C190 each contribute to the Zn(2+) site.

In terms of assembly, interacts with AKIN10. Inhibition of transcription factor activity by KIN10-mediated phosphorylation at Thr-98, Ser-178 and Ser-182 under sugar deprivation conditions, thus delaying flowering. Highly expressed in vegetative organs and at lower levels in flowers and siliques. Expressed predominantly in roots. In roots, present in cortex, endodermis, and pericycle layer.

It is found in the nucleus. In terms of biological role, transcription activator that binds to the DNA sequence 5'-CTTTTGTCC-3'. Regulates photoperiodic flowering by modulating sugar transport and metabolism. Regulates SUS1 and SUS4. Transcription factor that regulates tissue boundaries and asymmetric cell division. Contributes to the sequestration of 'SHORT-ROOT' to the nucleus. In Arabidopsis thaliana (Mouse-ear cress), this protein is Zinc finger protein NUTCRACKER.